We begin with the raw amino-acid sequence, 210 residues long: Leucyl/phenylalanyl-tRNA--protein transferase (210 aa).

The protein belongs to the L/F-transferase family.

It localises to the cytoplasm. The catalysed reaction is N-terminal L-lysyl-[protein] + L-leucyl-tRNA(Leu) = N-terminal L-leucyl-L-lysyl-[protein] + tRNA(Leu) + H(+). It carries out the reaction N-terminal L-arginyl-[protein] + L-leucyl-tRNA(Leu) = N-terminal L-leucyl-L-arginyl-[protein] + tRNA(Leu) + H(+). It catalyses the reaction L-phenylalanyl-tRNA(Phe) + an N-terminal L-alpha-aminoacyl-[protein] = an N-terminal L-phenylalanyl-L-alpha-aminoacyl-[protein] + tRNA(Phe). Functionally, functions in the N-end rule pathway of protein degradation where it conjugates Leu, Phe and, less efficiently, Met from aminoacyl-tRNAs to the N-termini of proteins containing an N-terminal arginine or lysine. This Roseobacter denitrificans (strain ATCC 33942 / OCh 114) (Erythrobacter sp. (strain OCh 114)) protein is Leucyl/phenylalanyl-tRNA--protein transferase.